A 114-amino-acid polypeptide reads, in one-letter code: T cell receptor beta variable 19 (114 aa).

The signal sequence occupies residues 1–21 (MSNQVLCCVVLCLLGANTVDG). Positions 22–114 (GITQSPKYLF…TAFYLCASSI (93 aa)) constitute an Ig-like domain. Residue N37 is glycosylated (N-linked (GlcNAc...) asparagine). An intrachain disulfide couples C42 to C110.

As to quaternary structure, alpha-beta TR is a heterodimer composed of an alpha and beta chain; disulfide-linked. The alpha-beta TR is associated with the transmembrane signaling CD3 coreceptor proteins to form the TR-CD3 (TcR or TCR). The assembly of alpha-beta TR heterodimers with CD3 occurs in the endoplasmic reticulum where a single alpha-beta TR heterodimer associates with one CD3D-CD3E heterodimer, one CD3G-CD3E heterodimer and one CD247 homodimer forming a stable octameric structure. CD3D-CD3E and CD3G-CD3E heterodimers preferentially associate with TR alpha and TR beta chains, respectively. The association of the CD247 homodimer is the last step of TcR assembly in the endoplasmic reticulum and is required for transport to the cell surface. (Microbial infection) Interacts with Staphylococcus aureus enterotoxin type B/SEB.

The protein localises to the cell membrane. V region of the variable domain of T cell receptor (TR) beta chain that participates in the antigen recognition. Alpha-beta T cell receptors are antigen specific receptors which are essential to the immune response and are present on the cell surface of T lymphocytes. Recognize peptide-major histocompatibility (MH) (pMH) complexes that are displayed by antigen presenting cells (APC), a prerequisite for efficient T cell adaptive immunity against pathogens. Binding of alpha-beta TR to pMH complex initiates TR-CD3 clustering on the cell surface and intracellular activation of LCK that phosphorylates the ITAM motifs of CD3G, CD3D, CD3E and CD247 enabling the recruitment of ZAP70. In turn ZAP70 phosphorylates LAT, which recruits numerous signaling molecules to form the LAT signalosome. The LAT signalosome propagates signal branching to three major signaling pathways, the calcium, the mitogen-activated protein kinase (MAPK) kinase and the nuclear factor NF-kappa-B (NF-kB) pathways, leading to the mobilization of transcription factors that are critical for gene expression and essential for T cell growth and differentiation. The T cell repertoire is generated in the thymus, by V-(D)-J rearrangement. This repertoire is then shaped by intrathymic selection events to generate a peripheral T cell pool of self-MH restricted, non-autoaggressive T cells. Post-thymic interaction of alpha-beta TR with the pMH complexes shapes TR structural and functional avidity. In Homo sapiens (Human), this protein is T cell receptor beta variable 19.